The following is a 350-amino-acid chain: MAAENERKSPSAVSDMGAWAMNVISSVGIIMANKQLMSSSGFAFSFATTLTGFHFALTALVGMVSNATGFSASKHVPMWELIWFSIVANVSIAAMNFSLMLNSVGFYQISKLSMIPVVCVMEWILHSKRYSREVKISVVVVVVGVGICTVTDVKVNAKGFICACVAIFSSSLQQILIGSLQKKYSIGSFELLSKTAPIQAFSLLVVGPLVDYLLSGKFIMKYNMSSGCFLFILLSCGLAVFCNISQYLCIGRFSAVSFQVIGHMKTVCILTLGWLLFDSAMTFKNVAGMIVAIVGMVIYSWAMELEKQSIIAAKALNSVKHSLTEEEFELLKEGVETTQSKDVELGRTKD.

Helical transmembrane passes span 12-32 (AVSD…IIMA), 41-61 (GFAF…TALV), 81-101 (LIWF…SLML), 104-124 (VGFY…MEWI), 133-153 (EVKI…VTDV), 160-180 (FICA…IGSL), 200-220 (AFSL…KFIM), 224-244 (MSSG…FCNI), 257-277 (SFQV…WLLF), and 286-306 (VAGM…MELE).

Belongs to the TPT transporter family. TPT (TC 2.A.7.9) subfamily.

It is found in the golgi apparatus membrane. In terms of biological role, nucleotide-sugar transporter that transports UDP-rhamnose or UDP-galactose and UMP in a strict counter-exchange mode. This is UDP-rhamnose/UDP-galactose transporter 3 from Arabidopsis thaliana (Mouse-ear cress).